The following is a 44-amino-acid chain: Antibacterial protein 3 homolog (44 aa).

Belongs to the staphylococcal hemolytic protein family.

The protein localises to the secreted. Its function is as follows. Has hemolytic activity and also inhibits the growth of gonococci. The polypeptide is Antibacterial protein 3 homolog (Staphylococcus haemolyticus (strain JCSC1435)).